Reading from the N-terminus, the 40-residue chain is Alpha-conotoxin GIC (40 aa).

Residues 1–20 (SDGRNDAAKAFDLISSTVKK) constitute a propeptide that is removed on maturation. Cystine bridges form between Cys22–Cys28 and Cys23–Cys36. Residues 24-26 (SHP) are ser-Xaa-Pro motif, crucial for potent interaction with nAChR. Cys36 bears the Cysteine amide mark.

In terms of tissue distribution, expressed by the venom duct.

It localises to the secreted. Its function is as follows. Alpha-conotoxins bind to the nicotinic acetylcholine receptors (nAChR) and inhibit them. This toxin reversibly blocks neuronal nAChRs (alpha-3/beta-2 = alpha-6 or -3/beta-2 or -3 &gt; alpha-3/beta-4 = alpha-4/beta-2). The protein is Alpha-conotoxin GIC of Conus geographus (Geography cone).